The chain runs to 510 residues: Facilitated glucose transporter protein 1 (510 aa).

The disordered stretch occupies residues 1–29; the sequence is MSEKSRSDTSATASLSDSSKSPSSYSTPG. The Cytoplasmic portion of the chain corresponds to 1-46; sequence MSEKSRSDTSATASLSDSSKSPSSYSTPGTTTQKIIFPDGKLTKCL. Residues 8 to 29 are compositionally biased toward low complexity; that stretch reads DTSATASLSDSSKSPSSYSTPG. A helical transmembrane segment spans residues 47 to 67; sequence AFSAFVITLASFQFGYHIGCV. Topologically, residues 68–100 are extracellular; that stretch reads NAPGGLITEWIIGSHKDLFDKELSRENADLAWS. A helical transmembrane segment spans residues 101–121; that stretch reads VAVSVFAVGGMIGGLSSGWLA. Residues 122–127 are Cytoplasmic-facing; that stretch reads DKVGRR. A helical transmembrane segment spans residues 128–146; the sequence is GALFYNNLLALAAAALMGL. At 147-160 the chain is on the extracellular side; sequence AKSVGAYPMVILGR. The chain crosses the membrane as a helical span at residues 161 to 181; it reads LIIGLNCGFSSALVPMFLTEI. The Cytoplasmic segment spans residues 182–195; it reads SPNNLRGMLGSLHQ. Gln-195 contacts D-glucose. Residues 196–216 form a helical membrane-spanning segment; that stretch reads LLVTIAILVSQIFGLPHLLGT. Residues 217 to 219 lie on the Extracellular side of the membrane; that stretch reads GDR. The chain crosses the membrane as a helical span at residues 220–240; the sequence is WPLIFAFTVVPAVLQLALLML. At 241–299 the chain is on the cytoplasmic side; the sequence is CPESPKYTMAVRGQRNEAESALKKLRDTEDVSTEIEAMQEEATAAGVQEKPKMGDMFKG. The chain crosses the membrane as a helical span at residues 300–320; that stretch reads ALLWPMSIAIMMMLAQQLSGI. D-glucose-binding positions include 315-316, Asn-321, and Asn-352; that span reads QQ. Residues 321-341 lie on the Extracellular side of the membrane; that stretch reads NVAMFYSTVIFRGAGLTGNEP. A helical membrane pass occupies residues 342-362; it reads FYATIGMGAVNVIMTLISVWL. At 363-373 the chain is on the cytoplasmic side; the sequence is VDHPKFGRRSL. Residues 374–394 form a helical membrane-spanning segment; that stretch reads LLAGLTGMFVSTLLLVGALTI. Topologically, residues 395-409 are extracellular; the sequence is QNSGGDKWASYSAIG. A helical transmembrane segment spans residues 410–430; that stretch reads FVLLFVISFATGPGAIPWFFV. Trp-427 serves as a coordination point for D-glucose. Residues 431–445 lie on the Cytoplasmic side of the membrane; the sequence is SEIFDSSARGNANSI. A helical transmembrane segment spans residues 446-464; sequence AVMVNWAANLLVGLTFLPI. The Extracellular segment spans residues 465-470; that stretch reads NNLMQQ. A helical membrane pass occupies residues 471-491; it reads YSFFIFSGFLAFFIFYTWKFV. Over 492-510 the chain is Cytoplasmic; the sequence is PETKGKSIEQIQAEFEKRK.

The protein belongs to the major facilitator superfamily. Sugar transporter (TC 2.A.1.1) family. Glucose transporter subfamily. As to expression, isoform a is expressed in pharyngeal muscle and intestinal cells in both embryos and adults (at protein level).

The protein resides in the cell membrane. It is found in the basolateral cell membrane. Functionally, facilitative glucose transporter that plays a role in glucose metabolism and regulation of longevity. May also play a role in lipid metabolism. Glucose transport activity of isoform a is competitively inhibited by mannose, galactose and fructose, suggesting ability to transport also other hexose sugars. The polypeptide is Facilitated glucose transporter protein 1 (Caenorhabditis elegans).